Here is a 617-residue protein sequence, read N- to C-terminus: Lipoteichoic acid synthase-like YvgJ (617 aa).

Topologically, residues Met1–Arg10 are cytoplasmic. The chain crosses the membrane as a helical span at residues Phe11–Phe31. The Extracellular portion of the chain corresponds to Asp32–Glu41. The chain crosses the membrane as a helical span at residues Leu42–Leu62. Residues Lys63–Arg68 are Cytoplasmic-facing. The helical transmembrane segment at Ala69–Tyr89 threads the bilayer. Topologically, residues Gly90–Lys115 are extracellular. The chain crosses the membrane as a helical span at residues Glu116 to Ala136. The Cytoplasmic portion of the chain corresponds to Arg137–Arg153. A helical membrane pass occupies residues Tyr154–Val171. Over Gln172 to Glu617 the chain is Extracellular. Mn(2+) contacts are provided by Glu251 and Thr293. The active site involves Thr293. His408 is a substrate binding site. Mn(2+) is bound by residues Asp467 and His468.

Belongs to the LTA synthase family. Proteolytically cleaved.

The protein resides in the cell membrane. Its subcellular location is the secreted. The sequence is that of Lipoteichoic acid synthase-like YvgJ (yvgJ) from Bacillus subtilis (strain 168).